Reading from the N-terminus, the 500-residue chain is Coiled-coil domain-containing protein 125 (500 aa).

Positions 1–105 (MSKVPRSSSE…TDSNSELSDE (105 aa)) are disordered. A compositionally biased stretch (acidic residues) spans 10–23 (EAEDIWETEDDMTE). Polar residues predominate over residues 92 to 101 (RLSSTDSNSE). 2 coiled-coil regions span residues 101–237 (ELSD…LEAL) and 286–314 (STRKLVLQLRHELETLQKSKEEAHITADA). Residue Ser-492 is modified to Phosphoserine.

Expressed in many tissues, with highest levels in spleen, thymus and bone marrow.

It localises to the cytoplasm. In terms of biological role, may be involved in the regulation of cell migration. The sequence is that of Coiled-coil domain-containing protein 125 (Ccdc125) from Mus musculus (Mouse).